The primary structure comprises 180 residues: Adenine phosphoribosyltransferase (180 aa).

Belongs to the purine/pyrimidine phosphoribosyltransferase family. As to quaternary structure, homodimer.

It is found in the cytoplasm. It carries out the reaction AMP + diphosphate = 5-phospho-alpha-D-ribose 1-diphosphate + adenine. It functions in the pathway purine metabolism; AMP biosynthesis via salvage pathway; AMP from adenine: step 1/1. Functionally, catalyzes a salvage reaction resulting in the formation of AMP, that is energically less costly than de novo synthesis. The protein is Adenine phosphoribosyltransferase of Mycobacterium avium (strain 104).